The primary structure comprises 150 residues: Ribonuclease H (150 aa).

The 142-residue stretch at 3 to 144 folds into the RNase H type-1 domain; the sequence is DKDMIEIWTD…ADGLARKGTD (142 aa). Mg(2+) is bound by residues aspartate 12, glutamate 50, aspartate 72, and aspartate 136. A disordered region spans residues 129-150; sequence DEGNERADGLARKGTDEVRGRK.

The protein belongs to the RNase H family. Monomer. Requires Mg(2+) as cofactor.

The protein localises to the cytoplasm. The enzyme catalyses Endonucleolytic cleavage to 5'-phosphomonoester.. Its function is as follows. Endonuclease that specifically degrades the RNA of RNA-DNA hybrids. This is Ribonuclease H from Hyphomonas neptunium (strain ATCC 15444).